The chain runs to 463 residues: ATP-dependent protease ATPase subunit HslU (463 aa).

ATP is bound by residues Ile-19, 61-66, Asp-277, Glu-341, and Arg-413; that span reads GVGKTE.

Belongs to the ClpX chaperone family. HslU subfamily. In terms of assembly, a double ring-shaped homohexamer of HslV is capped on each side by a ring-shaped HslU homohexamer. The assembly of the HslU/HslV complex is dependent on binding of ATP.

It is found in the cytoplasm. ATPase subunit of a proteasome-like degradation complex; this subunit has chaperone activity. The binding of ATP and its subsequent hydrolysis by HslU are essential for unfolding of protein substrates subsequently hydrolyzed by HslV. HslU recognizes the N-terminal part of its protein substrates and unfolds these before they are guided to HslV for hydrolysis. The polypeptide is ATP-dependent protease ATPase subunit HslU (Bacillus cytotoxicus (strain DSM 22905 / CIP 110041 / 391-98 / NVH 391-98)).